We begin with the raw amino-acid sequence, 226 residues long: UPF0758 protein GTNG_2548 (226 aa).

The MPN domain maps to 104-226 (VIRCPEDGAK…FISLKEKGYV (123 aa)). Histidine 175, histidine 177, and aspartate 188 together coordinate Zn(2+). Positions 175–188 (HNHPSGDPTPSRED) match the JAMM motif motif.

The protein belongs to the UPF0758 family.

The sequence is that of UPF0758 protein GTNG_2548 from Geobacillus thermodenitrificans (strain NG80-2).